Consider the following 75-residue polypeptide: Protein SlyX homolog (75 aa).

This sequence belongs to the SlyX family.

The polypeptide is Protein SlyX homolog (Chromobacterium violaceum (strain ATCC 12472 / DSM 30191 / JCM 1249 / CCUG 213 / NBRC 12614 / NCIMB 9131 / NCTC 9757 / MK)).